The following is a 259-amino-acid chain: Putative aldolase class 2 protein PA3430 (259 aa).

Zn(2+)-binding residues include H113, H115, and H176.

Belongs to the aldolase class II family. Zn(2+) is required as a cofactor.

The sequence is that of Putative aldolase class 2 protein PA3430 from Pseudomonas aeruginosa (strain ATCC 15692 / DSM 22644 / CIP 104116 / JCM 14847 / LMG 12228 / 1C / PRS 101 / PAO1).